The sequence spans 320 residues: Ribosomal RNA small subunit methyltransferase H (320 aa).

S-adenosyl-L-methionine is bound by residues 42–44 (GGH), Asp-62, Phe-86, Asp-108, and Gln-115.

Belongs to the methyltransferase superfamily. RsmH family.

The protein resides in the cytoplasm. The enzyme catalyses cytidine(1402) in 16S rRNA + S-adenosyl-L-methionine = N(4)-methylcytidine(1402) in 16S rRNA + S-adenosyl-L-homocysteine + H(+). Its function is as follows. Specifically methylates the N4 position of cytidine in position 1402 (C1402) of 16S rRNA. This is Ribosomal RNA small subunit methyltransferase H from Yersinia enterocolitica serotype O:8 / biotype 1B (strain NCTC 13174 / 8081).